A 439-amino-acid polypeptide reads, in one-letter code: Transmembrane protease serine 11F (439 aa).

Over 1 to 33 (MMYAPVEFSQTAYPRIEYQRRQQQFWDPIRLAL) the chain is Cytoplasmic. Residues 34–54 (FTLAIVAIVGITIGIVTHFVV) form a helical; Signal-anchor for type II membrane protein membrane-spanning segment. At 55–439 (EDDKSFYYLA…RDWIASKTGL (385 aa)) the chain is on the extracellular side. Positions 58-176 (KSFYYLASFQ…PSFSLTPIDS (119 aa)) constitute an SEA domain. The 232-residue stretch at 207–438 (IVQGRETAME…YRDWIASKTG (232 aa)) folds into the Peptidase S1 domain. Cys234 and Cys250 are oxidised to a cystine. Residues His249 and Asp294 each act as charge relay system in the active site. Disulfide bonds link Cys359-Cys375 and Cys386-Cys414. Ser390 serves as the catalytic Charge relay system.

This sequence belongs to the peptidase S1 family.

The protein localises to the membrane. Its function is as follows. Probable serine protease. The chain is Transmembrane protease serine 11F (Tmprss11f) from Mus musculus (Mouse).